The primary structure comprises 884 residues: Valine--tRNA ligase (884 aa).

The 'HIGH' region signature appears at 46–56 (PNVTGKLHLGH). A 'KMSKS' region motif is present at residues 520–524 (KMSKS). Lys523 is an ATP binding site. Residues 809 to 844 (LADLLNVEEELARLEKELAKWQKELNMVGKKLSNER) adopt a coiled-coil conformation.

It belongs to the class-I aminoacyl-tRNA synthetase family. ValS type 1 subfamily. In terms of assembly, monomer.

The protein localises to the cytoplasm. It carries out the reaction tRNA(Val) + L-valine + ATP = L-valyl-tRNA(Val) + AMP + diphosphate. In terms of biological role, catalyzes the attachment of valine to tRNA(Val). As ValRS can inadvertently accommodate and process structurally similar amino acids such as threonine, to avoid such errors, it has a 'posttransfer' editing activity that hydrolyzes mischarged Thr-tRNA(Val) in a tRNA-dependent manner. The chain is Valine--tRNA ligase from Streptococcus agalactiae serotype Ia (strain ATCC 27591 / A909 / CDC SS700).